The sequence spans 51 residues: Insulin (51 aa).

3 disulfides stabilise this stretch: Cys7–Cys37, Cys19–Cys50, and Cys36–Cys41.

It belongs to the insulin family. In terms of assembly, heterodimer of a B chain and an A chain linked by two disulfide bonds.

The protein localises to the secreted. In terms of biological role, insulin decreases blood glucose concentration. It increases cell permeability to monosaccharides, amino acids and fatty acids. It accelerates glycolysis, the pentose phosphate cycle, and glycogen synthesis in liver. In Meleagris gallopavo (Wild turkey), this protein is Insulin (INS).